We begin with the raw amino-acid sequence, 159 residues long: UPF0262 protein CCNA_02430 (159 aa).

Belongs to the UPF0262 family.

This chain is UPF0262 protein CCNA_02430, found in Caulobacter vibrioides (strain NA1000 / CB15N) (Caulobacter crescentus).